The sequence spans 137 residues: Hemoglobin subunit beta (137 aa).

Residues 3-137 (HWTQEERDEI…VIDAISKQYH (135 aa)) form the Globin domain. Residues H54 and H83 each coordinate heme b.

It belongs to the globin family. In terms of assembly, heterotetramer of two alpha chains and two beta chains. In terms of tissue distribution, red blood cells.

Its function is as follows. Involved in oxygen transport from gills to the various peripheral tissues. This is Hemoglobin subunit beta (HBB) from Mustelus griseus (Spotless smooth-hound).